Reading from the N-terminus, the 382-residue chain is O-methyltransferase okaF (382 aa).

Residues glutamate 249 and arginine 287 each coordinate S-adenosyl-L-methionine. The active-site Proton acceptor is the histidine 291.

Belongs to the class I-like SAM-binding methyltransferase superfamily. Cation-independent O-methyltransferase family.

The catalysed reaction is 3-desmethyl okaramine B + S-adenosyl-L-methionine = okaramine B + S-adenosyl-L-homocysteine + H(+). The protein operates within alkaloid biosynthesis. Functionally, O-methyltransferase; part of the gene cluster that mediates the biosynthesis of okaramine B, a prenylated indole alkaloid that possesses an unusual octacyclic ring system, including a four-membered azetidine ring and an eight-membered azocine ring, and that exhibits insecticidal activity against silkworm larvae. Within the pathway, okaF catalyzes the last step which is the methylation of 3-desmethyl okaramine B to produce okaramine B. With okaG, OkaF is also able to produce okaramine D from okaramine E. The biosynthesis begins with the NRPS okaA that condenses two tryptophan molecules into cyclo(L-Trp-L-Trp). Prenylation by the prenyltransferase okaC then leads to the formation of cyclo(N8-(alpha,alpha-dimethylallyl)-L-Trp-6a-(alpha,alpha-dime-thylallyl)-L-Trp). This is followed by indole 2,3-epoxidation by the FAD-dependent monooxygenase okaB to facilitate the formation of the hexahydropyrrolo[2,3-b]indole (HPI) moiety of okaramine C. The cytochrome P450 monooxygenase okaD then likely catalyzes formation of the eight-membered ring of okaramine A. The dioxygenase okaE further forms the unusual 2-dimethyl-3-methyl-azetidine ring to yield 12-deshydroxyl okaramine E, as well as the hydroxylation of 12-deshydroxyl okaramine E to produce okaramine E. The cytochrome P450 monoxygenase okaG converts 12-deshydroxyl okaramine E into 3-desmethyl okaramine B which is further methylated by the methyltransferase okaF into okaramine B. In a shunt pathway, okaG and okaF together are also able to convert okaramine E into okaramine D. Okaramine H is produced by nonenzymatic conversion from okaramine A. This chain is O-methyltransferase okaF, found in Penicillium ochrochloron.